Reading from the N-terminus, the 619-residue chain is Pentatricopeptide repeat-containing protein At1g68980, mitochondrial (619 aa).

A mitochondrion-targeting transit peptide spans methionine 1–isoleucine 100. 10 PPR repeats span residues aspartate 186–proline 221, aspartate 222–serine 256, arginine 257–serine 292, serine 295–serine 329, glycine 366–leucine 400, aspartate 401–aspartate 435, leucine 436–aspartate 466, lysine 472–proline 506, asparagine 507–leucine 541, and glutamate 542–valine 576.

Belongs to the PPR family. P subfamily.

Its subcellular location is the mitochondrion. This chain is Pentatricopeptide repeat-containing protein At1g68980, mitochondrial, found in Arabidopsis thaliana (Mouse-ear cress).